Reading from the N-terminus, the 757-residue chain is MDVNPTLLFLKVPAQNAISTTFPYTGDPPYSHGTGTGYTMDTVNRTHQYSERGKWTTNTETGAPQLNPIDGPLPEDNEPSGYAQTDCVLEAMAFLEESHPGIFENSCLETMEVVQQTRVDKLTQGRQTYDWTLNRNQPAATALANTIEVFRSNGLTANESGRLIDFLKDVMESMDKEEMEITTHFQRKRRVRDNMTKRMVTQRTIGKKKQRLNKRSYLIRALTLNTMTKDAERGKLKRRAIATPGMQIRGFVYFVEALARSICEKLEQSGLPVGGNEKKAKLANVVRKMMTNSQDTELSFTITGDNTKWNENQNPRMFLAMITYITRNQPEWFRNVLSIAPIMFSNKMARLGKGYMFESKSMKLRTQIPAEMLATIDLKYFNDSTRKKIEKIRPLLIDGTASLSPGMMMGMFNMLSTVLGVSILNLGQKRYTKTTYWWDGLQSSDDFALIVNAPNHEGIQAGVDRFYRTCKLVGINMSKKKSYINRTGTFEFTSFFYRYGFVANFSMELPSFGVSGINESADMSIGVTVIKNNMINNDLGPATAQMALQLFIKDYRYTYRCHRGDTQIQTRRSFEIKKLWEQTRSKAGLLVSDGGPNLYNIRNLHIPEVCLKWELMDEDYQGRLCNPLNPFVSHKEIESVNNAVVMPAHGPAKSMEYDAVATTHSWIPKRNRSILNTSQRGILEDEQMYQKCCNLFEKFFPSSSYRRPVGISSMVEAMVSRARIDARIDFESGRIKKEEFAEIMKICSTIEELRRQK.

The tract at residues 52–82 (RGKWTTNTETGAPQLNPIDGPLPEDNEPSGY) is disordered. Positions 55–64 (WTTNTETGAP) are enriched in polar residues. Short sequence motifs (nuclear localization signal) lie at residues 187–195 (RKRRVRDNM) and 203–216 (RTIG…NKRS). Positions 249-256 (RGFVYFVE) are promoter-binding site. A RdRp catalytic domain is found at 286 to 483 (VRKMMTNSQD…GINMSKKKSY (198 aa)).

Belongs to the influenza viruses polymerase PB1 family. As to quaternary structure, influenza RNA polymerase is composed of three subunits: PB1, PB2 and PA. Interacts (via N-terminus) with PA (via C-terminus). Interacts (via C-terminus) with PB2 (via N-terminus); this interaction is essential for transcription initiation. Post-translationally, phosphorylated by host PRKCA.

It localises to the host nucleus. It is found in the host cytoplasm. The catalysed reaction is RNA(n) + a ribonucleoside 5'-triphosphate = RNA(n+1) + diphosphate. Functionally, RNA-dependent RNA polymerase which is responsible for replication and transcription of virus RNA segments. The transcription of viral mRNAs occurs by a unique mechanism called cap-snatching. 5' methylated caps of cellular mRNAs are cleaved after 10-13 nucleotides by PA. In turn, these short capped RNAs are used as primers by PB1 for transcription of viral mRNAs. During virus replication, PB1 initiates RNA synthesis and copy vRNA into complementary RNA (cRNA) which in turn serves as a template for the production of more vRNAs. The sequence is that of RNA-directed RNA polymerase catalytic subunit from Aves.